Consider the following 43-residue polypeptide: METANLVTISISCLLVSLTGYAIYTSFGRPSEQLKDPFEDHED.

Residues 5–27 (NLVTISISCLLVSLTGYAIYTSF) form a helical membrane-spanning segment.

Belongs to the PsbN family.

The protein resides in the plastid. It localises to the chloroplast thylakoid membrane. May play a role in photosystem I and II biogenesis. The polypeptide is Protein PsbN (Gnetum gnemon (Spanish joint-fir)).